Here is a 588-residue protein sequence, read N- to C-terminus: Aspartate--tRNA ligase (588 aa).

Residue Glu-171 coordinates L-aspartate. The interval 195 to 198 is aspartate; that stretch reads QLFK. Arg-217 contributes to the L-aspartate binding site. ATP-binding positions include 217-219 and Gln-226; that span reads RDE. Position 447 (His-447) interacts with L-aspartate. Glu-481 is a binding site for ATP. Arg-488 is a binding site for L-aspartate. 533–536 serves as a coordination point for ATP; it reads GLDR.

It belongs to the class-II aminoacyl-tRNA synthetase family. Type 1 subfamily. In terms of assembly, homodimer.

It localises to the cytoplasm. It carries out the reaction tRNA(Asp) + L-aspartate + ATP = L-aspartyl-tRNA(Asp) + AMP + diphosphate. Its function is as follows. Catalyzes the attachment of L-aspartate to tRNA(Asp) in a two-step reaction: L-aspartate is first activated by ATP to form Asp-AMP and then transferred to the acceptor end of tRNA(Asp). This is Aspartate--tRNA ligase from Aeromonas salmonicida (strain A449).